The sequence spans 557 residues: Copine-7 (557 aa).

2 C2 domains span residues M1–L128 and N135–D263. Ca(2+)-binding residues include D168, D174, D230, D232, and D238. Residues H306–V505 enclose the VWFA domain.

Belongs to the copine family. It depends on Ca(2+) as a cofactor.

It is found in the cytoplasm. It localises to the nucleus. Its subcellular location is the cell membrane. Calcium-dependent phospholipid-binding protein that may play a role in calcium-mediated intracellular processes. This chain is Copine-7, found in Mus musculus (Mouse).